The following is a 331-amino-acid chain: ADP-L-glycero-D-manno-heptose-6-epimerase (331 aa).

NADP(+) is bound by residues 11-12, 32-33, Lys39, Lys54, 75-79, and Asn92; these read FI, DN, and EGACS. Residue Tyr139 is the Proton acceptor of the active site. Lys143 contributes to the NADP(+) binding site. Substrate is bound at residue Asn168. The NADP(+) site is built by Val169 and Lys177. Lys177 serves as the catalytic Proton acceptor. Residues Arg179, His186, 200–203, Arg213, and Tyr292 contribute to the substrate site; that span reads FGEY.

Belongs to the NAD(P)-dependent epimerase/dehydratase family. HldD subfamily. Homopentamer. It depends on NADP(+) as a cofactor.

It carries out the reaction ADP-D-glycero-beta-D-manno-heptose = ADP-L-glycero-beta-D-manno-heptose. It functions in the pathway nucleotide-sugar biosynthesis; ADP-L-glycero-beta-D-manno-heptose biosynthesis; ADP-L-glycero-beta-D-manno-heptose from D-glycero-beta-D-manno-heptose 7-phosphate: step 4/4. Functionally, catalyzes the interconversion between ADP-D-glycero-beta-D-manno-heptose and ADP-L-glycero-beta-D-manno-heptose via an epimerization at carbon 6 of the heptose. This chain is ADP-L-glycero-D-manno-heptose-6-epimerase, found in Cupriavidus necator (strain ATCC 17699 / DSM 428 / KCTC 22496 / NCIMB 10442 / H16 / Stanier 337) (Ralstonia eutropha).